The chain runs to 876 residues: Alanine--tRNA ligase (876 aa).

Zn(2+) is bound by residues His564, His568, Cys666, and His670.

The protein belongs to the class-II aminoacyl-tRNA synthetase family. Zn(2+) serves as cofactor.

It localises to the cytoplasm. The enzyme catalyses tRNA(Ala) + L-alanine + ATP = L-alanyl-tRNA(Ala) + AMP + diphosphate. Its function is as follows. Catalyzes the attachment of alanine to tRNA(Ala) in a two-step reaction: alanine is first activated by ATP to form Ala-AMP and then transferred to the acceptor end of tRNA(Ala). Also edits incorrectly charged Ser-tRNA(Ala) and Gly-tRNA(Ala) via its editing domain. This is Alanine--tRNA ligase from Colwellia psychrerythraea (strain 34H / ATCC BAA-681) (Vibrio psychroerythus).